A 130-amino-acid polypeptide reads, in one-letter code: Methylglyoxal synthase (130 aa).

Positions 1 to 130 (MMTRPRIALI…AELSRVEAQP (130 aa)) constitute an MGS-like domain. Substrate contacts are provided by residues His12, Lys16, 38 to 41 (TGTT), and 58 to 59 (SG). Catalysis depends on Asp64, which acts as the Proton donor/acceptor. His91 provides a ligand contact to substrate.

This sequence belongs to the methylglyoxal synthase family.

It carries out the reaction dihydroxyacetone phosphate = methylglyoxal + phosphate. In terms of biological role, catalyzes the formation of methylglyoxal from dihydroxyacetone phosphate. This chain is Methylglyoxal synthase, found in Cupriavidus pinatubonensis (strain JMP 134 / LMG 1197) (Cupriavidus necator (strain JMP 134)).